The sequence spans 130 residues: Small ribosomal subunit protein uS9 (130 aa).

It belongs to the universal ribosomal protein uS9 family.

This Bacillus velezensis (strain DSM 23117 / BGSC 10A6 / LMG 26770 / FZB42) (Bacillus amyloliquefaciens subsp. plantarum) protein is Small ribosomal subunit protein uS9.